The following is a 265-amino-acid chain: Protein ENDO16 (265 aa).

Residues 25-27 carry the Cell attachment site motif; it reads RGD. Residues 71-265 form a disordered region; it reads SPNAPSSQME…KEEEEEERSG (195 aa). Residues 73–92 are compositionally biased toward polar residues; the sequence is NAPSSQMESEGSANPSTIGS. Tandem repeats lie at residues 75–94, 105–124, 128–147, and 148–167. Residues 75–257 form a 6 X approximate repeats region; sequence PSSQMESEGS…QSESEDPEKE (183 aa). 6 stretches are compositionally biased toward acidic residues: residues 112-125, 133-144, 152-169, 194-212, 222-243, and 250-265; these read EGSE…TEGA, ESEGGDQEESEG, MESE…DSGE, EVDE…EEPG, ESEG…EVIE, and ESED…ERSG. 2 tandem repeats follow at residues 217 to 236 and 238 to 257. Asn228 carries N-linked (GlcNAc...) asparagine glycosylation.

First expressed in the vegetal plate and progressively the expression becomes restricted to a subset of endodermal cells as development proceeds.

In terms of biological role, may be an adhesion molecule involved in gastrulation of the sea urchin embryo. The chain is Protein ENDO16 (ENDO16) from Strongylocentrotus purpuratus (Purple sea urchin).